The following is a 400-amino-acid chain: MAKQKFERTKPHVNIGTIGHVDHGKTTLTAAITMVLATVGKAQVKKYDKIDNAPEERERGITINTAHVEYETEKRHYAHVDCPGHADYVKNMITGAAQMDGAILVVSAADGPMPQTREHILLARQVGVPYIVVYLNKADMVDDPELLELVDMEVRELLSTYEFPGDEIPIITGSALKAMECACGKRECEWCKSIWELMDAVDEYIPTPQRAVDKPFLMPVEDVFSITGRGTVATGRIERGQVKVGDEVEIVGLQDKPRKTVVTGVEMFRKILDVGVAGDNVGCLLRGVDRKEIERGQVLAKPGSIKPHKSFSAEVYVLTKEEGGRHTPFFNGYRPQFYFRTTDVTGVVKLPEGVEMVMPGDNVRIDIDLITPIAIEEGLRFAIREGGRTVGAGVVTGIRE.

The tr-type G domain maps to 10–209; sequence KPHVNIGTIG…AVDEYIPTPQ (200 aa). Residues 19-26 form a G1 region; that stretch reads GHVDHGKT. 19-26 is a GTP binding site; sequence GHVDHGKT. A Mg(2+)-binding site is contributed by Thr26. Residues 60–64 form a G2 region; the sequence is GITIN. The segment at 81 to 84 is G3; that stretch reads DCPG. GTP is bound by residues 81–85 and 136–139; these read DCPGH and NKAD. The tract at residues 136–139 is G4; that stretch reads NKAD. The tract at residues 174–176 is G5; that stretch reads SAL.

It belongs to the TRAFAC class translation factor GTPase superfamily. Classic translation factor GTPase family. EF-Tu/EF-1A subfamily. In terms of assembly, monomer.

Its subcellular location is the cytoplasm. The enzyme catalyses GTP + H2O = GDP + phosphate + H(+). Functionally, GTP hydrolase that promotes the GTP-dependent binding of aminoacyl-tRNA to the A-site of ribosomes during protein biosynthesis. In Pelotomaculum thermopropionicum (strain DSM 13744 / JCM 10971 / SI), this protein is Elongation factor Tu 2.